Reading from the N-terminus, the 286-residue chain is Bifunctional protein FolD (286 aa).

Residues 165–167 (GRS) and Ser190 contribute to the NADP(+) site.

Belongs to the tetrahydrofolate dehydrogenase/cyclohydrolase family. Homodimer.

It carries out the reaction (6R)-5,10-methylene-5,6,7,8-tetrahydrofolate + NADP(+) = (6R)-5,10-methenyltetrahydrofolate + NADPH. The catalysed reaction is (6R)-5,10-methenyltetrahydrofolate + H2O = (6R)-10-formyltetrahydrofolate + H(+). It functions in the pathway one-carbon metabolism; tetrahydrofolate interconversion. Catalyzes the oxidation of 5,10-methylenetetrahydrofolate to 5,10-methenyltetrahydrofolate and then the hydrolysis of 5,10-methenyltetrahydrofolate to 10-formyltetrahydrofolate. This chain is Bifunctional protein FolD, found in Burkholderia lata (strain ATCC 17760 / DSM 23089 / LMG 22485 / NCIMB 9086 / R18194 / 383).